A 169-amino-acid chain; its full sequence is FAM231A/C-like protein LOC102723383 (169 aa).

Residues 82-140 (LIRSGSSQNESQEDQGAGLISQAGLKADNRRESSTWANEVEDRRPQCTPALNLTPSHPH) form a disordered region.

It belongs to the FAM231 family.

This Homo sapiens (Human) protein is FAM231A/C-like protein LOC102723383.